Reading from the N-terminus, the 329-residue chain is Thioredoxin domain-containing protein 6 (329 aa).

The 105-residue stretch at 11-115 folds into the Thioredoxin domain; it reads QVNINTQELW…QKTILQQLEA (105 aa). Residues 157–303 are NDK; the sequence is GKTCTLGIIK…LFPSFKFSDK (147 aa). A disordered region spans residues 303–329; that stretch reads KDKEAPPGAEAQTMVGPVEDPCMSERI.

It belongs to the NDK family. Monomer and homodimer. As to expression, expressed in lung airway epithelium (at protein level).

The protein resides in the cytoplasm. Its subcellular location is the cytoskeleton. It localises to the cilium axoneme. The protein localises to the dynein axonemal particle. Functionally, may be a regulator of microtubule physiology. This chain is Thioredoxin domain-containing protein 6, found in Mus musculus (Mouse).